We begin with the raw amino-acid sequence, 463 residues long: MTTETRSLYSQLPAIDRLLRDSSFLSLRDTYGHTRVVELLRQMLDEAREVIRDSQTLPAWCENWAQEVDARLTKEAQSALRPVINLTGTVLHTNLGRALQAEAAVEAVAQAMRSPVTLEYDLDDAGRGHRDRALAQLLCRITGAEDACIVNNNAAAVLLMLAATASGKEVVVSRGELVEIGGAFRIPDVMRQAGCTLHEVGTTNRTHANDYRQAVNENTALLMKVHTSNYSIQGFTKAIDEAELVALGKELDVPVVTDLGSGSLVDLSQYGLPKEPMPQELIAAGVSLVSFSGDKLLGGPQAGIIVGKKEMIARLQSHPLKRALRADKMTLAALEATLRLYLHPEALSEKLPTLRLLTRSAEVIQIQAQRLQAPLAAHYGAEFAVQVMPCLSQIGSGSLPVDRLPSAALTFTPHDGRGSHLESLAARWRELPVPMIGRIYDGRLWLDLRCLEDEQRFLEMLLK.

Residue Lys295 is modified to N6-(pyridoxal phosphate)lysine.

The protein belongs to the SelA family. In terms of assembly, homodecamer; pentamer of dimers. Binds only one seryl-tRNA(Sec) per dimer. Pyridoxal 5'-phosphate serves as cofactor.

The protein resides in the cytoplasm. It catalyses the reaction L-seryl-tRNA(Sec) + selenophosphate + H(+) = L-selenocysteinyl-tRNA(Sec) + phosphate. It functions in the pathway aminoacyl-tRNA biosynthesis; selenocysteinyl-tRNA(Sec) biosynthesis; selenocysteinyl-tRNA(Sec) from L-seryl-tRNA(Sec) (bacterial route): step 1/1. Functionally, converts seryl-tRNA(Sec) to selenocysteinyl-tRNA(Sec) required for selenoprotein biosynthesis. This Shigella sonnei (strain Ss046) protein is L-seryl-tRNA(Sec) selenium transferase.